The primary structure comprises 351 residues: ABC transporter nucleoside-binding protein BmpA (351 aa).

A signal peptide spans 1-21 (MKKRVIAVSAIALASVAVLAG). Cys22 carries N-palmitoyl cysteine lipidation. Cys22 is lipidated: S-diacylglycerol cysteine.

The protein belongs to the BMP lipoprotein family. As to quaternary structure, the complex is composed of two ATP-binding proteins (NupA), two transmembrane proteins (NupB and NupC) and a solute-binding protein (BmpA).

It is found in the cell membrane. Functionally, part of an ABC transporter complex involved in the uptake of all common nucleosides. This Lactococcus lactis subsp. cremoris (strain MG1363) protein is ABC transporter nucleoside-binding protein BmpA.